Here is a 972-residue protein sequence, read N- to C-terminus: DNA topoisomerase 1 (972 aa).

2 disordered regions span residues 1 to 210 (MSGD…VFVK) and 300 to 416 (HEQS…RQKA). A compositionally biased stretch (polar residues) spans 11–31 (IHIQNGGSCEVVQSNGVTTNG). Over residues 32 to 50 (HGHHHHHHSSSSSSSKHKS) the composition is skewed to basic residues. Basic and acidic residues-rich tracts occupy residues 51 to 65 (SSKD…EHKS), 72 to 86 (SKEH…DRHK), and 93 to 103 (KHRDKDKERDG). A compositionally biased stretch (low complexity) spans 104 to 114 (SSNSHRSGSSS). Basic residues predominate over residues 125–138 (SKHKSSSGHHKRSS). Positions 139–151 (KDKERRDKDKDRG) are enriched in basic and acidic residues. Residues 173 to 183 (SHKSSSSSSSS) are compositionally biased toward low complexity. Ser303 bears the Phosphoserine mark. Tyr304 bears the Phosphotyrosine mark. A compositionally biased stretch (acidic residues) spans 316-330 (HDDDADEMNDDEEDV). 3 interaction with DNA regions span residues 648–649 (KY), 711–716 (RAGNEK), and 807–809 (TAK). The Topo IB-type catalytic domain maps to 655–972 (SSKLKGEKDH…VHMADENYRF (318 aa)). Tyr930 (O-(3'-phospho-DNA)-tyrosine intermediate) is an active-site residue.

It belongs to the type IB topoisomerase family. As to quaternary structure, interacts with Topors.

Its subcellular location is the nucleus. It is found in the cytoplasm. The catalysed reaction is ATP-independent breakage of single-stranded DNA, followed by passage and rejoining.. In terms of biological role, releases the supercoiling and torsional tension of DNA introduced during the DNA replication and transcription by transiently cleaving and rejoining one strand of the DNA duplex. Introduces a single-strand break via transesterification at a target site in duplex DNA. The scissile phosphodiester is attacked by the catalytic tyrosine of the enzyme, resulting in the formation of a DNA-(3'-phosphotyrosyl)-enzyme intermediate and the expulsion of a 5'-OH DNA strand. The free DNA strand then undergoes passage around the unbroken strand thus removing DNA supercoils. Finally, in the religation step, the DNA 5'-OH attacks the covalent intermediate to expel the active-site tyrosine and restore the DNA phosphodiester backbone. The protein is DNA topoisomerase 1 of Drosophila melanogaster (Fruit fly).